Here is a 434-residue protein sequence, read N- to C-terminus: Histidinol dehydrogenase (434 aa).

The NAD(+) site is built by Tyr130, Gln192, and Asn215. Ser238, Gln260, and His263 together coordinate substrate. Zn(2+) contacts are provided by Gln260 and His263. Catalysis depends on proton acceptor residues Glu328 and His329. Residues His329, Asp362, Glu416, and His421 each coordinate substrate. Asp362 contacts Zn(2+). His421 provides a ligand contact to Zn(2+).

Belongs to the histidinol dehydrogenase family. Zn(2+) serves as cofactor.

The enzyme catalyses L-histidinol + 2 NAD(+) + H2O = L-histidine + 2 NADH + 3 H(+). The protein operates within amino-acid biosynthesis; L-histidine biosynthesis; L-histidine from 5-phospho-alpha-D-ribose 1-diphosphate: step 9/9. Catalyzes the sequential NAD-dependent oxidations of L-histidinol to L-histidinaldehyde and then to L-histidine. This Synechococcus sp. (strain ATCC 27144 / PCC 6301 / SAUG 1402/1) (Anacystis nidulans) protein is Histidinol dehydrogenase.